Reading from the N-terminus, the 307-residue chain is Ornithine carbamoyltransferase (307 aa).

Residues 50–53, Q77, R101, and 128–131 each bind carbamoyl phosphate; these read STRT and HPCQ. Residues N160, D224, and 228 to 229 each bind L-ornithine; that span reads SM. Carbamoyl phosphate-binding positions include 264 to 265 and R292; that span reads CL.

This sequence belongs to the aspartate/ornithine carbamoyltransferase superfamily. OTCase family.

It localises to the cytoplasm. The enzyme catalyses carbamoyl phosphate + L-ornithine = L-citrulline + phosphate + H(+). The protein operates within amino-acid biosynthesis; L-arginine biosynthesis; L-arginine from L-ornithine and carbamoyl phosphate: step 1/3. In terms of biological role, reversibly catalyzes the transfer of the carbamoyl group from carbamoyl phosphate (CP) to the N(epsilon) atom of ornithine (ORN) to produce L-citrulline. The polypeptide is Ornithine carbamoyltransferase (Clavibacter sepedonicus (Clavibacter michiganensis subsp. sepedonicus)).